We begin with the raw amino-acid sequence, 382 residues long: Methylthioribose-1-phosphate isomerase (382 aa).

The active-site Proton donor is the Asp258.

The protein belongs to the eIF-2B alpha/beta/delta subunits family. MtnA subfamily.

The protein resides in the cytoplasm. It localises to the nucleus. It catalyses the reaction 5-(methylsulfanyl)-alpha-D-ribose 1-phosphate = 5-(methylsulfanyl)-D-ribulose 1-phosphate. It participates in amino-acid biosynthesis; L-methionine biosynthesis via salvage pathway; L-methionine from S-methyl-5-thio-alpha-D-ribose 1-phosphate: step 1/6. Its function is as follows. Catalyzes the interconversion of methylthioribose-1-phosphate (MTR-1-P) into methylthioribulose-1-phosphate (MTRu-1-P). This is Methylthioribose-1-phosphate isomerase from Laccaria bicolor (strain S238N-H82 / ATCC MYA-4686) (Bicoloured deceiver).